The following is a 66-amino-acid chain: Protein translocase subunit SecE (66 aa).

Residues L41–L61 form a helical membrane-spanning segment.

It belongs to the SecE/SEC61-gamma family. In terms of assembly, component of the Sec protein translocase complex. Heterotrimer consisting of SecY (alpha), SecG (beta) and SecE (gamma) subunits. The heterotrimers can form oligomers, although 1 heterotrimer is thought to be able to translocate proteins. Interacts with the ribosome. May interact with SecDF, and other proteins may be involved.

The protein resides in the cell membrane. Its function is as follows. Essential subunit of the Sec protein translocation channel SecYEG. Clamps together the 2 halves of SecY. May contact the channel plug during translocation. In Archaeoglobus fulgidus (strain ATCC 49558 / DSM 4304 / JCM 9628 / NBRC 100126 / VC-16), this protein is Protein translocase subunit SecE.